A 926-amino-acid polypeptide reads, in one-letter code: OTU domain-containing protein 7A (926 aa).

At serine 121 the chain carries Phosphoserine. The interval 170–413 (ERDLIEQATM…AVDPGKDWEW (244 aa)) is TRAF-binding. The interval 185–452 (AGRLNWWSTV…VTWIRIPSET (268 aa)) is catalytic. The region spanning 201–377 (LLPLATTGDG…QAHFSALVSM (177 aa)) is the OTU domain. Aspartate 209 is a catalytic residue. Cysteine 212 serves as the catalytic Nucleophile. The active-site Proton acceptor is histidine 370. 3 disordered regions span residues 455–517 (PLAQ…DSVA), 540–615 (GLVH…GDAW), and 671–779 (EQEQ…ARQS). The span at 484 to 494 (VCSNSNSNNGK) shows a compositional bias: low complexity. Over residues 495–513 (NGKDKEKEKQRKDKDKTRA) the composition is skewed to basic and acidic residues. The Nuclear localization signal motif lies at 497–512 (KDKEKEKQRKDKDKTR). Composition is skewed to low complexity over residues 579 to 595 (GASASTSPSEKTTPSPT), 680 to 691 (AAAAAAATATAT), and 731 to 750 (SPGTGASARAARAAGGAASP). Gly residues predominate over residues 751–767 (GPGGGARRAAPGTGGPT). Arginine 880 is subject to Omega-N-methylarginine. Residues 884–919 (GPAQRRCQRENCAFYGRAETEHFCSYCYREELRRRR) form an A20-type zinc finger. 4 residues coordinate Zn(2+): cysteine 890, cysteine 895, cysteine 907, and cysteine 910.

This sequence belongs to the peptidase C64 family.

Its subcellular location is the cytoplasm. It is found in the nucleus. It carries out the reaction Thiol-dependent hydrolysis of ester, thioester, amide, peptide and isopeptide bonds formed by the C-terminal Gly of ubiquitin (a 76-residue protein attached to proteins as an intracellular targeting signal).. Deubiquitinase, which cleaves 'Lys-11'-linked polyubiquitin chains. In Mus musculus (Mouse), this protein is OTU domain-containing protein 7A (Otud7a).